Reading from the N-terminus, the 1202-residue chain is Nitric oxide synthase 3 (1202 aa).

Positions 1 to 70 are disordered; sequence MGNLKSVGQE…PPDGPKFPRV (70 aa). The N-myristoyl glycine moiety is linked to residue Gly2. Residues Cys15 and Cys26 are each lipidated (S-palmitoyl cysteine). Residues 15–27 show a composition bias toward gly residues; sequence CGLGLGLGLGLCG. The segment covering 33–65 has biased composition (pro residues); it reads SPAPEPSQAPVPPSPTRPAPDHSPPLTRPPDGP. Positions 93 and 98 each coordinate Zn(2+). Residues 97–485 form an interaction with NOSIP region; the sequence is RCLGSLVFPR…PDPWKGSAAK (389 aa). Residue Ser101 coordinates (6R)-L-erythro-5,6,7,8-tetrahydrobiopterin. Cys183 contributes to the heme b binding site. L-arginine is bound by residues Gln246, Trp355, Tyr356, and Glu360. 3 residues coordinate (6R)-L-erythro-5,6,7,8-tetrahydrobiopterin: Ala445, Trp446, and Phe459. Residue Tyr474 coordinates heme b. A calmodulin-binding region spans residues 489–509; the sequence is ITRKKTFKEVANAVKISASLM. Phosphothreonine; by AMPK is present on Thr494. Positions 519–702 constitute a Flavodoxin-like domain; it reads ATILYGSETG…AFRGWAQAAF (184 aa). Residues Ser525, Glu526, Thr527, Arg529, Ser571, and Thr572 each coordinate FMN. Residues Ser614, Ser632, and Ser637 each carry the phosphoserine modification. FMN contacts are provided by Ser653, Cys660, Glu686, and Gln690. One can recognise an FAD-binding FR-type domain in the interval 755 to 1001; it reads RKMFQATILS…IRGAPSFRLP (247 aa). Residue Arg775 participates in NADP(+) binding. Position 797 (His797) interacts with FAD. The interval 817–843 is disordered; sequence EDPPPSTEPVAVEQLEKGSPGGPPPGW. Ser835 bears the Phosphoserine mark. FAD is bound by residues Arg937, Tyr939, Ser940, Thr955, Ala957, Tyr961, Val974, Cys975, and Ser976. NADP(+) contacts are provided by Thr1015, Arg1048, Ser1077, Arg1078, Lys1084, Tyr1086, and Gln1088. Thr1174 carries the phosphothreonine modification. Ser1176 carries the post-translational modification Phosphoserine; by AMPK. Ser1178 bears the Phosphoserine mark.

The protein belongs to the NOS family. Homodimer. Interacts with NOSIP and NOSTRIN. Interacts with HSP90AB1. Forms a complex with ASL, ASS1 and SLC7A1; the complex regulates cell-autonomous L-arginine synthesis and citrulline recycling while channeling extracellular L-arginine to nitric oxide synthesis pathway. It depends on heme b as a cofactor. FAD is required as a cofactor. FMN serves as cofactor. The cofactor is (6R)-L-erythro-5,6,7,8-tetrahydrobiopterin. Phosphorylation by AMPK at Ser-1176 in the presence of Ca(2+)-calmodulin (CaM) activates activity. In absence of Ca(2+)-calmodulin, AMPK also phosphorylates Thr-494, resulting in inhibition of activity. As to expression, expressed constitutively by vascular endothelium. Detected in alveolar and serosal epithelial cells as well as in endothelial cells in one day old rat. In adult lung, detected in rare endothelial cells.

It is found in the membrane. Its subcellular location is the caveola. It localises to the cytoplasm. The protein resides in the cytoskeleton. The protein localises to the golgi apparatus. It is found in the cell membrane. The catalysed reaction is 2 L-arginine + 3 NADPH + 4 O2 + H(+) = 2 L-citrulline + 2 nitric oxide + 3 NADP(+) + 4 H2O. With respect to regulation, stimulated by calcium/calmodulin. Inhibited by NOSIP and NOSTRIN. Functionally, produces nitric oxide (NO) which is implicated in vascular smooth muscle relaxation through a cGMP-mediated signal transduction pathway. NO mediates vascular endothelial growth factor (VEGF)-induced angiogenesis in coronary vessels and promotes blood clotting through the activation of platelets. In Rattus norvegicus (Rat), this protein is Nitric oxide synthase 3.